The chain runs to 328 residues: Malate dehydrogenase (328 aa).

16 to 22 (GAAGQIS) is an NAD(+) binding site. Substrate contacts are provided by arginine 97 and arginine 103. NAD(+)-binding positions include asparagine 110, glutamine 117, and 134–136 (VGN). Substrate is bound by residues asparagine 136 and arginine 167. The Proton acceptor role is filled by histidine 192.

It belongs to the LDH/MDH superfamily. MDH type 2 family. As to quaternary structure, homotetramer.

It catalyses the reaction (S)-malate + NAD(+) = oxaloacetate + NADH + H(+). With respect to regulation, citrate activates the enzyme in the oxidation of malate to oxaloacetate and inhibits it in the reverse reaction. In terms of biological role, catalyzes the reversible oxidation of malate to oxaloacetate. Exhibits higher catalytic efficiency for oxaloacetate reduction than for malate oxidation in vitro. Almost equally active both for NADH and NADPH on the bases of the kcat values at pH 6.5, but catalytic efficiency for oxaloacetate reduction is 50-fold higher with NADH. This is Malate dehydrogenase from Corynebacterium glutamicum (strain ATCC 13032 / DSM 20300 / JCM 1318 / BCRC 11384 / CCUG 27702 / LMG 3730 / NBRC 12168 / NCIMB 10025 / NRRL B-2784 / 534).